The sequence spans 371 residues: Leucine-rich repeat-containing protein 58 (371 aa).

The residue at position 24 (S24) is a Phosphoserine. LRR repeat units lie at residues 45–66 (ALLR…LGSG), 69–91 (HLQL…LALR), 92–113 (GLRT…PKGL), 121–143 (SLQV…LELR), 144–166 (ALQT…ENLQ), 167–189 (SLEC…GNLP), 190–211 (SLNY…LSQL), 213–234 (SLRS…ILNL), and 236–256 (HLEE…RDLT). The span at 340 to 351 (SSASHSSTSQSE) shows a compositional bias: low complexity. Positions 340 to 361 (SSASHSSTSQSESDSEDEASVA) are disordered.

In Homo sapiens (Human), this protein is Leucine-rich repeat-containing protein 58 (LRRC58).